Consider the following 240-residue polypeptide: uncharacterized protein (240 aa).

Positions 1–27 (MKDLQKKSSVRRQITNEDDERYGEDSI) are disordered. S59 and S95 each carry phosphoserine. The segment at 189-227 (RTPSPTGKSVGDEATSNNMHSSSAIRNPNGPTVDPEEGK) is disordered. The span at 202–218 (ATSNNMHSSSAIRNPNG) shows a compositional bias: polar residues.

This is an uncharacterized protein from Saccharomyces cerevisiae (strain ATCC 204508 / S288c) (Baker's yeast).